Reading from the N-terminus, the 1361-residue chain is Protein transport protein SEC16B homolog (1361 aa).

A Phosphoserine modification is found at Ser46. Disordered regions lie at residues 82-109, 487-513, 984-1013, 1025-1062, 1163-1204, 1216-1235, and 1306-1361; these read NEGASGSVGEDEPSSIAPEAVQFPHSDA, VDDAPQSFQSSQLFSPSAGRSSDGRPP, PVGGMPPPAPHSTKGNLQGNEYQHQQQEAT, SSLMPPASVEPTHESGGSGRRMAVHTRSVSEPDFGRTP, ENKS…ARGR, NPPGRGNSHTMIPSPSVQTA, and SVNG…EVEL. Residues 491 to 503 show a composition bias toward low complexity; it reads PQSFQSSQLFSPS. Over residues 996-1013 the composition is skewed to polar residues; it reads TKGNLQGNEYQHQQQEAT. Composition is skewed to polar residues over residues 1169–1200, 1222–1234, and 1308–1325; these read IPSNGNWSSGGPTPSENSSGIPPISHGSNQFS, NSHTMIPSPSVQT, and NGDNHQPPTSRRTASWSG. Residues 1326 to 1354 are compositionally biased toward low complexity; the sequence is NFNTSFTPPTSPSTFKPVLLNSSSSSLGE.

Belongs to the SEC16 family.

It localises to the golgi apparatus. The protein resides in the endoplasmic reticulum. Its function is as follows. Required for protein transport from the endoplasmic reticulum to the Golgi apparatus. The protein is Protein transport protein SEC16B homolog of Arabidopsis thaliana (Mouse-ear cress).